Reading from the N-terminus, the 800-residue chain is Leukocyte receptor cluster member 8 homolog (800 aa).

Disordered regions lie at residues 118-149, 175-229, 245-273, 335-394, and 407-519; these read NYQSMSSQSGQHQGNLAQPPVPGLEDSSMSYS, PCIQ…GFKF, SSEHHDNSAGQQQQQATHMHHPLQQPQQQ, TIDW…GRGS, and KESS…HGHG. 2 stretches are compositionally biased toward low complexity: residues 120–131 and 184–201; these read QSMSSQSGQHQG and NQSNPHSSSNQPNYSQQS. The span at 252–261 shows a compositional bias: polar residues; sequence SAGQQQQQAT. The span at 338–352 shows a compositional bias: basic and acidic residues; the sequence is WSREPLPGKDGGKES. The span at 360–387 shows a compositional bias: polar residues; it reads QTTLQTSHGSTITITQSPRGGGNSTNAA. Residues 409–418 are compositionally biased toward low complexity; that stretch reads SSSSSSAGSR. 2 stretches are compositionally biased toward basic residues: residues 419-433 and 508-519; these read SRSRSPSHSPHRRYR and EKRAARFQHGHG. The 165-residue stretch at 636–800 folds into the PCI domain; that stretch reads DHEEFNQCQA…KLSLAVLPNI (165 aa).

This is Leukocyte receptor cluster member 8 homolog (leng8) from Xenopus laevis (African clawed frog).